A 1075-amino-acid polypeptide reads, in one-letter code: Carbamoyl phosphate synthase large chain (1075 aa).

The segment at M1 to E403 is carboxyphosphate synthetic domain. 12 residues coordinate ATP: R129, R169, G175, G176, Q208, V210, E215, G241, V242, H243, Q285, and E299. In terms of domain architecture, ATP-grasp 1 spans K133 to V328. Mg(2+) contacts are provided by Q285, E299, and N301. 3 residues coordinate Mn(2+): Q285, E299, and N301. The interval I404–A548 is oligomerization domain. The tract at residues K549–G930 is carbamoyl phosphate synthetic domain. Residues Q673–A864 enclose the ATP-grasp 2 domain. ATP-binding residues include R709, H748, L750, E755, G780, I781, H782, S783, Q823, and E835. Mg(2+)-binding residues include Q823, E835, and N837. The Mn(2+) site is built by Q823, E835, and N837. An MGS-like domain is found at E931 to A1070. The tract at residues E931–R1075 is allosteric domain.

The protein belongs to the CarB family. As to quaternary structure, composed of two chains; the small (or glutamine) chain promotes the hydrolysis of glutamine to ammonia, which is used by the large (or ammonia) chain to synthesize carbamoyl phosphate. Tetramer of heterodimers (alpha,beta)4. Requires Mg(2+) as cofactor. The cofactor is Mn(2+).

It carries out the reaction hydrogencarbonate + L-glutamine + 2 ATP + H2O = carbamoyl phosphate + L-glutamate + 2 ADP + phosphate + 2 H(+). The catalysed reaction is hydrogencarbonate + NH4(+) + 2 ATP = carbamoyl phosphate + 2 ADP + phosphate + 2 H(+). It functions in the pathway amino-acid biosynthesis; L-arginine biosynthesis; carbamoyl phosphate from bicarbonate: step 1/1. The protein operates within pyrimidine metabolism; UMP biosynthesis via de novo pathway; (S)-dihydroorotate from bicarbonate: step 1/3. Functionally, large subunit of the glutamine-dependent carbamoyl phosphate synthetase (CPSase). CPSase catalyzes the formation of carbamoyl phosphate from the ammonia moiety of glutamine, carbonate, and phosphate donated by ATP, constituting the first step of 2 biosynthetic pathways, one leading to arginine and/or urea and the other to pyrimidine nucleotides. The large subunit (synthetase) binds the substrates ammonia (free or transferred from glutamine from the small subunit), hydrogencarbonate and ATP and carries out an ATP-coupled ligase reaction, activating hydrogencarbonate by forming carboxy phosphate which reacts with ammonia to form carbamoyl phosphate. The sequence is that of Carbamoyl phosphate synthase large chain from Haemophilus ducreyi (strain 35000HP / ATCC 700724).